A 266-amino-acid chain; its full sequence is 2-C-methyl-D-erythritol 4-phosphate cytidylyltransferase (266 aa).

Basic and acidic residues predominate over residues 234–251 (ADDARSAEARSAEARSEE). The disordered stretch occupies residues 234–266 (ADDARSAEARSAEARSEEPQFAGARSTDARSGG).

The protein belongs to the IspD/TarI cytidylyltransferase family. IspD subfamily.

The catalysed reaction is 2-C-methyl-D-erythritol 4-phosphate + CTP + H(+) = 4-CDP-2-C-methyl-D-erythritol + diphosphate. It participates in isoprenoid biosynthesis; isopentenyl diphosphate biosynthesis via DXP pathway; isopentenyl diphosphate from 1-deoxy-D-xylulose 5-phosphate: step 2/6. Functionally, catalyzes the formation of 4-diphosphocytidyl-2-C-methyl-D-erythritol from CTP and 2-C-methyl-D-erythritol 4-phosphate (MEP). This Frankia casuarinae (strain DSM 45818 / CECT 9043 / HFP020203 / CcI3) protein is 2-C-methyl-D-erythritol 4-phosphate cytidylyltransferase.